A 106-amino-acid polypeptide reads, in one-letter code: Immunoglobulin lambda constant 3 (106 aa).

One can recognise an Ig-like domain in the interval 7–101; sequence PSVTLFPPSS…EGSTVEKTVA (95 aa). A disulfide bridge links C28 with C87.

As to quaternary structure, immunoglobulins are composed of two identical heavy chains and two identical light chains; disulfide-linked.

The protein resides in the secreted. It localises to the cell membrane. Functionally, constant region of immunoglobulin light chains. Immunoglobulins, also known as antibodies, are membrane-bound or secreted glycoproteins produced by B lymphocytes. In the recognition phase of humoral immunity, the membrane-bound immunoglobulins serve as receptors which, upon binding of a specific antigen, trigger the clonal expansion and differentiation of B lymphocytes into immunoglobulins-secreting plasma cells. Secreted immunoglobulins mediate the effector phase of humoral immunity, which results in the elimination of bound antigens. The antigen binding site is formed by the variable domain of one heavy chain, together with that of its associated light chain. Thus, each immunoglobulin has two antigen binding sites with remarkable affinity for a particular antigen. The variable domains are assembled by a process called V-(D)-J rearrangement and can then be subjected to somatic hypermutations which, after exposure to antigen and selection, allow affinity maturation for a particular antigen. This chain is Immunoglobulin lambda constant 3, found in Homo sapiens (Human).